The sequence spans 64 residues: Small ribosomal subunit protein bS21 (64 aa).

It belongs to the bacterial ribosomal protein bS21 family.

The protein is Small ribosomal subunit protein bS21 of Flavobacterium johnsoniae (strain ATCC 17061 / DSM 2064 / JCM 8514 / BCRC 14874 / CCUG 350202 / NBRC 14942 / NCIMB 11054 / UW101) (Cytophaga johnsonae).